Here is a 311-residue protein sequence, read N- to C-terminus: Olfactory receptor 5P3 (311 aa).

Residues 1-25 lie on the Extracellular side of the membrane; that stretch reads MGTGNDTTVVEFTLLGLSEDTTVCA. An N-linked (GlcNAc...) asparagine glycan is attached at Asn-5. The helical transmembrane segment at 26–46 threads the bilayer; it reads ILFLVFLGIYVVTLMGNISII. At 47–54 the chain is on the cytoplasmic side; it reads VLIRRSHH. Residues 55-75 form a helical membrane-spanning segment; sequence LHTPMYIFLCHLAFVDIGYSS. At 76–99 the chain is on the extracellular side; the sequence is SVTPVMLMSFLRKETSLPVAGCVA. Cysteines 97 and 189 form a disulfide. A helical membrane pass occupies residues 100–120; it reads QLCSVVTFGTAECFLLAAMAY. Residues 121–139 are Cytoplasmic-facing; that stretch reads DRYVAICSPLLYSTCMSPG. Residues 140–160 form a helical membrane-spanning segment; that stretch reads VCIILVGMSYLGGCVNAWTFI. The Extracellular portion of the chain corresponds to 161 to 196; sequence GCLLRLSFCGPNKVNHFFCDYSPLLKLACSHDFTFE. Residues 197-217 form a helical membrane-spanning segment; the sequence is IIPAISSGSIIVATVCVIAIS. At 218–237 the chain is on the cytoplasmic side; it reads YIYILITILKMHSTKGRHKA. A helical membrane pass occupies residues 238-258; it reads FSTCTSHLTAVTLFYGTITFI. Residues 259–271 are Extracellular-facing; the sequence is YVMPKSSYSTDQN. Residues 272-292 traverse the membrane as a helical segment; sequence KVVSVFYTVVIPMLNPLIYSL. At 293-311 the chain is on the cytoplasmic side; sequence RNKEIKGALKRELRIKIFS.

This sequence belongs to the G-protein coupled receptor 1 family. As to expression, expressed in the tongue.

It localises to the cell membrane. Functionally, odorant receptor (Potential). May be involved in taste perception. The sequence is that of Olfactory receptor 5P3 (OR5P3) from Homo sapiens (Human).